A 414-amino-acid polypeptide reads, in one-letter code: Gamma-glutamyl phosphate reductase (414 aa).

It belongs to the gamma-glutamyl phosphate reductase family.

Its subcellular location is the cytoplasm. It carries out the reaction L-glutamate 5-semialdehyde + phosphate + NADP(+) = L-glutamyl 5-phosphate + NADPH + H(+). Its pathway is amino-acid biosynthesis; L-proline biosynthesis; L-glutamate 5-semialdehyde from L-glutamate: step 2/2. Its function is as follows. Catalyzes the NADPH-dependent reduction of L-glutamate 5-phosphate into L-glutamate 5-semialdehyde and phosphate. The product spontaneously undergoes cyclization to form 1-pyrroline-5-carboxylate. The sequence is that of Gamma-glutamyl phosphate reductase from Geobacillus thermodenitrificans (strain NG80-2).